A 125-amino-acid chain; its full sequence is MSIETLVEEIGKLTLTEASELVKALEEKFGVSAAPAIVAGIASAAPAGDAPAQEEKTEFDVVLTSAGESKINVIKVVRALTGLGLKEAKDLVDGAPKTVKEAVSKDEAEKIAKELKDVGAGVELK.

The protein belongs to the bacterial ribosomal protein bL12 family. Homodimer. Part of the ribosomal stalk of the 50S ribosomal subunit. Forms a multimeric L10(L12)X complex, where L10 forms an elongated spine to which 2 to 4 L12 dimers bind in a sequential fashion. Binds GTP-bound translation factors.

In terms of biological role, forms part of the ribosomal stalk which helps the ribosome interact with GTP-bound translation factors. Is thus essential for accurate translation. The polypeptide is Large ribosomal subunit protein bL12 (Chlorobium limicola (strain DSM 245 / NBRC 103803 / 6330)).